A 2587-amino-acid polypeptide reads, in one-letter code: Fap1 adhesin (2587 aa).

The first 85 residues, Met-1–Ala-85, serve as a signal peptide directing secretion. 4 disordered regions span residues Ser-107–Val-158, Ser-173–Arg-212, Asp-515–Ser-539, and Glu-568–Val-2558. The ser-rich region 1, SRR1 stretch occupies residues Ser-107–Ser-195. 2 stretches are compositionally biased toward low complexity: residues Ser-121–Val-158 and Ser-173–Ser-191. Residues Ser-191–Thr-522 are sufficient to block adherence to beads. Over residues Gly-192 to Lys-202 the composition is skewed to polar residues. Basic and acidic residues predominate over residues Gly-203–Arg-212. A ser-rich region 2, SRR2 region spans residues Ser-516–Ser-2561. Low complexity-rich tracts occupy residues Ser-519–Ser-539 and Glu-568–Ser-2545. Residues Ser-2367 to Glu-2587 form a required for localization to cell wall, fimbriae formation and adherence to saliva-coated hydroxyapatite beads (SHA) but not secretion region. The LPXTG sorting signal motif lies at Leu-2551–Gly-2555. A Pentaglycyl murein peptidoglycan amidated threonine modification is found at Thr-2554. The propeptide at Gly-2555–Glu-2587 is removed by sortase.

This sequence belongs to the serine-rich repeat protein (SRRP) family. In terms of processing, glycosylated; occurs within the cytoplasm. It is probable that most of the Ser residues in SSR1 and SSR2 are O-GlcNAcylated. Sequential glycosylation by sugar transferases are able to generate complex sugar polymorphisms.

It localises to the cytoplasm. Its subcellular location is the secreted. The protein localises to the cell wall. It is found in the fimbrium. The major structural element of fimbriae. Required for adherence to saliva-coated hydroxyapatite beads (SHA), an in vitro tooth model. A Fap1-dependent increase in adherence is seen as the pH is reduced from pH 8 to pH 5. In Streptococcus parasanguinis, this protein is Fap1 adhesin (fap1).